A 484-amino-acid chain; its full sequence is Probable glycine dehydrogenase (decarboxylating) subunit 2 (484 aa).

K264 carries the N6-(pyridoxal phosphate)lysine modification.

It belongs to the GcvP family. C-terminal subunit subfamily. The glycine cleavage system is composed of four proteins: P, T, L and H. In this organism, the P 'protein' is a heterodimer of two subunits. It depends on pyridoxal 5'-phosphate as a cofactor.

It carries out the reaction N(6)-[(R)-lipoyl]-L-lysyl-[glycine-cleavage complex H protein] + glycine + H(+) = N(6)-[(R)-S(8)-aminomethyldihydrolipoyl]-L-lysyl-[glycine-cleavage complex H protein] + CO2. Functionally, the glycine cleavage system catalyzes the degradation of glycine. The P protein binds the alpha-amino group of glycine through its pyridoxal phosphate cofactor; CO(2) is released and the remaining methylamine moiety is then transferred to the lipoamide cofactor of the H protein. The protein is Probable glycine dehydrogenase (decarboxylating) subunit 2 of Legionella pneumophila (strain Paris).